We begin with the raw amino-acid sequence, 64 residues long: MGGGRVAHPVLKGPSVVKELVIGTVLGLAAGGLWKMHHWNEQRKTRAFYDLLEKGEISVVVDEE.

Residues 15–34 form a helical membrane-spanning segment; sequence SVVKELVIGTVLGLAAGGLW.

This sequence belongs to the cytochrome c oxidase subunit 5C family.

It localises to the mitochondrion inner membrane. Its function is as follows. This protein is one of the nuclear-coded polypeptide chains of cytochrome c oxidase, the terminal oxidase in mitochondrial electron transport. In Helianthus annuus (Common sunflower), this protein is Cytochrome c oxidase subunit 5C-2 (COX5C2).